Here is an 87-residue protein sequence, read N- to C-terminus: Small ribosomal subunit protein bS20 (87 aa).

Positions 1–22 are disordered; the sequence is MANSAGSKKRARQAVKSRAHNG. The span at 7–19 shows a compositional bias: basic residues; sequence SKKRARQAVKSRA.

It belongs to the bacterial ribosomal protein bS20 family.

Binds directly to 16S ribosomal RNA. The sequence is that of Small ribosomal subunit protein bS20 from Marinomonas sp. (strain MWYL1).